Consider the following 91-residue polypeptide: UPF0147 protein DKAM_0139 (91 aa).

This sequence belongs to the UPF0147 family.

This chain is UPF0147 protein DKAM_0139, found in Desulfurococcus amylolyticus (strain DSM 18924 / JCM 16383 / VKM B-2413 / 1221n) (Desulfurococcus kamchatkensis).